The following is a 236-amino-acid chain: Adenosine 5'-phosphosulfate reductase (236 aa).

Positions 123, 124, 206, and 209 each coordinate [4Fe-4S] cluster. C232 functions as the Nucleophile; cysteine thiosulfonate intermediate in the catalytic mechanism.

The protein belongs to the PAPS reductase family. CysH subfamily. [4Fe-4S] cluster is required as a cofactor.

It is found in the cytoplasm. The enzyme catalyses [thioredoxin]-disulfide + sulfite + AMP + 2 H(+) = adenosine 5'-phosphosulfate + [thioredoxin]-dithiol. Its pathway is sulfur metabolism; hydrogen sulfide biosynthesis; sulfite from sulfate. In terms of biological role, catalyzes the formation of sulfite from adenosine 5'-phosphosulfate (APS) using thioredoxin as an electron donor. The sequence is that of Adenosine 5'-phosphosulfate reductase from Streptomyces coelicolor (strain ATCC BAA-471 / A3(2) / M145).